Here is a 148-residue protein sequence, read N- to C-terminus: Large ribosomal subunit protein uL15 (148 aa).

Residues methionine 1–glutamate 51 form a disordered region. Over residues arginine 21–serine 31 the composition is skewed to gly residues.

The protein belongs to the universal ribosomal protein uL15 family. Part of the 50S ribosomal subunit.

Binds to the 23S rRNA. The sequence is that of Large ribosomal subunit protein uL15 from Porphyromonas gingivalis (strain ATCC 33277 / DSM 20709 / CIP 103683 / JCM 12257 / NCTC 11834 / 2561).